Reading from the N-terminus, the 164-residue chain is Nitric oxide synthase, inducible (164 aa).

(6R)-L-erythro-5,6,7,8-tetrahydrobiopterin is bound at residue phenylalanine 3. Residue tyrosine 18 participates in heme b binding. Residues 42–62 (FKGLIRAVLFSQTLIKSALAK) form a calmodulin-binding region. The Flavodoxin-like domain occupies 66-164 (CTVLYATETG…SRMYPHFCAF (99 aa)). Residues threonine 72, glutamate 73, threonine 74, lysine 76, serine 77, serine 118, threonine 119, serine 155, and cysteine 162 each contribute to the FMN site.

This sequence belongs to the NOS family. Homodimer. Requires heme b as cofactor. The cofactor is FAD. FMN is required as a cofactor. It depends on (6R)-L-erythro-5,6,7,8-tetrahydrobiopterin as a cofactor.

It localises to the cytoplasm. Its subcellular location is the cytosol. It carries out the reaction 2 L-arginine + 3 NADPH + 4 O2 + H(+) = 2 L-citrulline + 2 nitric oxide + 3 NADP(+) + 4 H2O. Its activity is regulated as follows. Not stimulated by calcium/calmodulin. In terms of biological role, produces nitric oxide (NO) which is a messenger molecule with diverse functions throughout the body. In macrophages, NO mediates tumoricidal and bactericidal actions. Also has nitrosylase activity and mediates cysteine S-nitrosylation of cytoplasmic target proteins such COX2. The polypeptide is Nitric oxide synthase, inducible (nos2) (Carassius auratus (Goldfish)).